The chain runs to 564 residues: Excitatory amino acid transporter 4 (564 aa).

Over 1-55 (MSSHGNSLFLRESGQRLGRVGWLQRLQESLQQRALRTRLRLQTMTREHVLRFLRR) the chain is Cytoplasmic. The residue at position 2 (Ser-2) is a Phosphoserine. 3 consecutive transmembrane segments (helical) span residues 56–76 (NAFI…AFAL), 99–119 (MLQM…MASL), and 133–153 (VYYM…VTII). N-linked (GlcNAc...) asparagine glycosylation is found at Asn-216, Asn-232, and Asn-239. The next 3 membrane-spanning stretches (helical) occupy residues 262 to 285 (SANG…IGGV), 295 to 322 (FFDS…LFLI), and 344 to 365 (LTVI…YFLI). An intramembrane region (discontinuously helical) is located at residues 371–401 (FPFIGGVLQALITAMGTSSSSATLPITFRCL). 388 to 390 (SSS) contacts L-aspartate. The chain crosses the membrane as a helical span at residues 411–437 (ITRFVLPVGATVNMDGTALYEALAAIF). Positions 419, 421, and 423 each coordinate Na(+). L-aspartate is bound by residues Thr-427, 468-472 (IPQAG), Asp-501, and Asn-508. Positions 451-484 (ITTISITATAASVGAAGIPQAGLVTMVIVLTSVG) form an intramembrane region, discontinuously helical. The helical transmembrane segment at 498 to 519 (WFLDRLRTMTNVLGDSIGAAVI) threads the bilayer. Asn-508 and Asp-512 together coordinate Na(+).

It belongs to the dicarboxylate/amino acid:cation symporter (DAACS) (TC 2.A.23) family. SLC1A6 subfamily. As to quaternary structure, homotrimer. Detected in brain, cerebellum and hippocampus.

It is found in the cell membrane. It catalyses the reaction K(+)(in) + L-glutamate(out) + 3 Na(+)(out) + H(+)(out) = K(+)(out) + L-glutamate(in) + 3 Na(+)(in) + H(+)(in). It carries out the reaction K(+)(in) + L-aspartate(out) + 3 Na(+)(out) + H(+)(out) = K(+)(out) + L-aspartate(in) + 3 Na(+)(in) + H(+)(in). The enzyme catalyses D-aspartate(out) + K(+)(in) + 3 Na(+)(out) + H(+)(out) = D-aspartate(in) + K(+)(out) + 3 Na(+)(in) + H(+)(in). Sodium-dependent, high-affinity amino acid transporter that mediates the uptake of L-glutamate and also L-aspartate and D-aspartate. Functions as a symporter that transports one amino acid molecule together with two or three Na(+) ions and one proton, in parallel with the counter-transport of one K(+) ion. Mediates Cl(-) flux that is not coupled to amino acid transport; this avoids the accumulation of negative charges due to aspartate and Na(+) symport. Plays a redundant role in the rapid removal of released glutamate from the synaptic cleft, which is essential for terminating the postsynaptic action of glutamate. This is Excitatory amino acid transporter 4 (SLC1A6) from Canis lupus familiaris (Dog).